We begin with the raw amino-acid sequence, 122 residues long: MARILNIEIPNNKRVVISLTYIYGIGKSLASEICKKANVDENTKTAELTEAQLSKLREVAKAYTTEGDLRREVTLNIKRYMEIKCYRGIRHRKGLPVRGQSTQKNARTRKGPRKTVAGKKGK.

The tract at residues 94–122 is disordered; it reads GLPVRGQSTQKNARTRKGPRKTVAGKKGK. A compositionally biased stretch (basic residues) spans 106–122; it reads ARTRKGPRKTVAGKKGK.

Belongs to the universal ribosomal protein uS13 family. Part of the 30S ribosomal subunit. Forms a loose heterodimer with protein S19. Forms two bridges to the 50S subunit in the 70S ribosome.

Located at the top of the head of the 30S subunit, it contacts several helices of the 16S rRNA. In the 70S ribosome it contacts the 23S rRNA (bridge B1a) and protein L5 of the 50S subunit (bridge B1b), connecting the 2 subunits; these bridges are implicated in subunit movement. Contacts the tRNAs in the A and P-sites. This Mycoplasmopsis synoviae (strain 53) (Mycoplasma synoviae) protein is Small ribosomal subunit protein uS13.